A 626-amino-acid chain; its full sequence is MIGQANRIAAAVSTACLAVLLAGCATVPTGGPTFEGRGGGAQGQVDTFTRLLPAGPQPGWGENALVRGFLKDLGSFEENHEAARLYMTEECADVWQPSDRVLVYEEMDAVRFDVETVEEERAARVRVRTPLYATIRPDGQYVPASPGEAIDVVFDLTKVDGEWRIANLPDTILLSRQDVDRVYRPLNLYYFNRDMSTLVPDPVFLPVSSAVNITEQLSQRLVTMLLDGPTDWLAPAVRTSFPAGTTATVEYSSGNVTVNLDHRAAAADPRRLFGMGAQLVWTLKQLPEIQEFTLRLDGEEVELPGVEDGVLQASSQEWNSVNPAGMTGSPRAYFLRDGQLWSLDVDQREALVPGAAGHGRILVEEHAVSLDETRVAGIMPDDDSVRVAPIAEDGEYTTVLQGGDYTSLSWDGYGNLWVVEDLSAEVAEAEREEDLADDTEPGDTAVGSTERRETDRGEKRQVTRLWLLAEDADPVEVHAPELAGVPVTELRVSRDGTRVAVLTGGADGGQVLVGRVVHGESTVSLQAFLPLARDLVTVTDLSWRGADQLAVLGQKERGAIQAYLVSLNGSGESTSAGAVTGSDMKTITAAPGMPLLSGTEEDTISSSSDRLMWRRAVEGTKPVYPG.

Residues 1–23 (MIGQANRIAAAVSTACLAVLLAG) form the signal peptide. C24 is lipidated: N-palmitoyl cysteine. A lipid anchor (S-diacylglycerol cysteine) is attached at C24. Residues 428–457 (EAEREEDLADDTEPGDTAVGSTERRETDRG) form a disordered region. Residues 430-441 (EREEDLADDTEP) are compositionally biased toward acidic residues.

The protein belongs to the LpqB lipoprotein family.

The protein resides in the cell membrane. This Thermobifida fusca (strain YX) protein is Lipoprotein LpqB.